A 127-amino-acid chain; its full sequence is Basic leucine zipper transcriptional factor ATF-like 3 (127 aa).

Residues 1-72 (MSQGLPAAGS…LHEEYESLEQ (72 aa)) form a disordered region. A phosphoserine mark is found at S2 and S31. The bZIP domain maps to 35-98 (DDRKVRRREK…KHLTEALKEH (64 aa)). The segment at 37–62 (RKVRRREKNRVAAQRSRKKQTQKADK) is basic motif. Residues 58–67 (QKADKLHEEY) show a composition bias toward basic and acidic residues. The interval 63 to 91 (LHEEYESLEQENTMLRREIGKLTEELKHL) is leucine-zipper.

Belongs to the bZIP family. As to quaternary structure, heterodimer; heterodimerizes with JUN family proteins. Interacts with JUN.

It is found in the nucleus. Its function is as follows. AP-1 family transcription factor that controls the differentiation of CD8(+) thymic conventional dendritic cells in the immune system. Required for development of CD8-alpha(+) classical dendritic cells (cDCs) and related CD103(+) dendritic cells that cross-present antigens to CD8 T-cells and produce interleukin-12 (IL12) in response to pathogens. Acts via the formation of a heterodimer with JUN family proteins that recognizes and binds DNA sequence 5'-TGA[CG]TCA-3' and regulates expression of target genes. This chain is Basic leucine zipper transcriptional factor ATF-like 3 (BATF3), found in Homo sapiens (Human).